We begin with the raw amino-acid sequence, 711 residues long: Ubiquitin carboxyl-terminal hydrolase BAP1 (711 aa).

Positions 4 to 234 (GWLELESDPG…ARLHVLKVNR (231 aa)) constitute a UCH catalytic domain. The Arg-finger motif signature appears at 56 to 60 (RRSRR). Cys91 (nucleophile) is an active-site residue. His169 (proton donor) is an active-site residue. Residues 255–337 (THKSQESQLP…VPPNPTPIVQ (83 aa)) form a disordered region. Residues 269 to 278 (PASSKSPLAL) show a composition bias toward low complexity. Phosphoserine is present on Ser274. An HBM-like motif motif is present at residues 345 to 348 (NHNY). Phosphoserine is present on residues Ser351 and Ser377. Disordered stretches follow at residues 354 to 420 (QEEE…GQLS) and 446 to 506 (SIKT…SPVT). Over residues 377-391 (SDDEDDYEDEEEDDA) the composition is skewed to acidic residues. The span at 462-506 (THSQPSPTPSNESTDTASEIGSAFNSPLRSPIRSANPTRPSSPVT) shows a compositional bias: polar residues. Position 475 is a phosphothreonine (Thr475). A phosphoserine mark is found at Ser503, Ser519, Ser567, and Ser579. Residues 557–605 (LTESGKGSSPSIRPSQGSQGSGSPEEKEVVEAVDSREKPGLVRPSESLN) form a disordered region. The span at 563–579 (GSSPSIRPSQGSQGSGS) shows a compositional bias: low complexity. The segment at 578–703 (GSPEEKEVVE…QRKPDRRKRS (126 aa)) is interaction with BRCA1. The segment covering 580-596 (PEEKEVVEAVDSREKPG) has biased composition (basic and acidic residues). Residues 612 to 643 (KELLALLKCVEAEIANYEACLKEEVEKRKKFK) are a coiled coil. Residues 624-668 (EIANYEACLKEEVEKRKKFKIDDQRRTHNYDEFICTFISMLAQEG) form an interaction with YY1 region. The region spanning 652–680 (NYDEFICTFISMLAQEGMLANLVEQNISV) is the ULD domain. The tract at residues 681 to 683 (RRR) is interaction with nucleosomal DNA forming a DNA clamp with ASXL1. Residues 681 to 704 (RRRQGVSIGRLHKQRKPDRRKRSR) carry the Classical bipartite Nuclear localization signal (NLS) motif. The segment at 685–711 (GVSIGRLHKQRKPDRRKRSRPYKAKRQ) is disordered. The segment at 695–711 (RKPDRRKRSRPYKAKRQ) is positively charged C-terminal extension (CTE). The Nuclear localization signal motif lies at 699–704 (RRKRSR). A Non-classical PY-nuclear localization signal (PY-NLS) motif is present at residues 699 to 706 (RRKRSRPY).

It belongs to the peptidase C12 family. BAP1 subfamily. Core component of the polycomb repressive deubiquitinase (PR-DUB) complex, at least composed of BAP1, one of ASXL1, ASXL2 or (probably) ASXL3, and one of MBD5 or MBD6. The PR-DUB core associates with a number of accessory proteins, including FOXK1, FOXK2, KDM1B, HCFC1, YY1 and OGT; KDM1B specifically associates with ASXL2 PR-DUB complexes. The BAP1 deubiquitinase activity is not required for PR-DUB assembly. Homodimerizes (via coiled-coil hinge-region between the UCH and ULD domains) to mediate assembly of 2 copies of the BAP1-ASXL heterodimer into a bisymmetric tetramer; dimerization enhances association with nucleosomes. The PR-DUB complex associates with nucleosomes to mediate deubiquitination of 'lys-120' of histone H2AK118ub1 substrates; the association requires the positively charged C-terminal tail of BAP1. Interacts (via ULD domain) with ASXL1 (via DEUBAD domain); the interaction is direct and forms a ubiquitin binding cleft. The interaction with ASXL1 stabilizes BAP1 but is not required for nucleosome binding. Associates (via C-terminus) with nucleosome and chromatosome complexes through direct interaction with DNA and the histone3/4 dimer; this association displaces the histone-2A C-terminal tail, extending and orienting the H2AK118ub1 substrate towards the BAP1 deubiquitinase active site. Also interacts (via arginine finger) directly with the histone H2A-H2B acidic patch; this interaction is not critical for nucleosome-chromatosome association but may play a role in orienting the H2AK118ub1 substrate towards the PR-DUB complex active site. Interacts with BRCA1 (via the RING finger). Interacts (via HBM-like motif) with HCFC1. Interacts (via a C-terminal region overlapping the ULD domain) with YY1; the interaction is direct and requires the interaction with HCFC1. Interacts (when phosphorylated at Thr-475) with FOXK1. Interacts (when phosphorylated at Thr-475) with FOXK2; leading to recruitment of the PR-DUB complex and repression of FOXK2 target genes. Interacts (via non-classical PY-NLS) with TNPO1/transportin-1 (via HEAT repeats 8-12); the interaction is direct, mediates BAP1 nuclear localization and disrupts BAP1 homodimerization. Interacts (via C-terminus) with KPNA1/importin alpha5 and KPNA2/importin alpha1; these interactions can contribute to BAP1 nuclear localization but are less important than the interaction with TNPO1/transportin-1. The interaction with TNPO1/transportin-1 disrupts homodimerization and blocks ubiquitination by UBE2O. Ubiquitinated: monoubiquitinated at multiple sites within its nuclear localization signal (NLS) BY UBE2O, leading to cytoplasmic retention. Able to mediate autodeubiquitination via intramolecular interactions to counteract cytoplasmic retention. Monoubiquitinated on at least 4 sites near or within its PY-NLS.

Its subcellular location is the cytoplasm. It localises to the nucleus. It is found in the chromosome. The enzyme catalyses Thiol-dependent hydrolysis of ester, thioester, amide, peptide and isopeptide bonds formed by the C-terminal Gly of ubiquitin (a 76-residue protein attached to proteins as an intracellular targeting signal).. Functionally, deubiquitinating enzyme that plays a key role in chromatin by mediating deubiquitination of histone H2A and HCFC1. Catalytic component of the polycomb repressive deubiquitinase (PR-DUB) complex, a complex that specifically mediates deubiquitination of histone H2A monoubiquitinated at 'Lys-120' (H2AK119ub1). Does not deubiquitinate monoubiquitinated histone H2B. The PR-DUB complex is an epigenetic regulator of gene expression and acts as a transcriptional coactivator, affecting genes involved in development, cell communication, signaling, cell proliferation and cell viability. Antagonizes PRC1 mediated H2AK119ub1 monoubiquitination. As part of the PR-DUB complex, associates with chromatin enriched in histone marks H3K4me1, H3K4me3, and H3K27Ac, but not in H3K27me3. Acts as a regulator of cell growth by mediating deubiquitination of HCFC1 N-terminal and C-terminal chains, with some specificity toward 'Lys-48'-linked polyubiquitin chains compared to 'Lys-63'-linked polyubiquitin chains. Deubiquitination of HCFC1 does not lead to increase stability of HCFC1. Interferes with the BRCA1 and BARD1 heterodimer activity by inhibiting their ability to mediate ubiquitination and autoubiquitination. It however does not mediate deubiquitination of BRCA1 and BARD1. Able to mediate autodeubiquitination via intramolecular interactions to counteract monoubiquitination at the nuclear localization signal (NLS), thereby protecting it from cytoplasmic sequestration. Negatively regulates epithelial-mesenchymal transition (EMT) of trophoblast stem cells during placental development by regulating genes involved in epithelial cell integrity, cell adhesion and cytoskeletal organization. The protein is Ubiquitin carboxyl-terminal hydrolase BAP1 (BAP1) of Bos taurus (Bovine).